Here is a 445-residue protein sequence, read N- to C-terminus: Phosphoglucosamine mutase (445 aa).

The active-site Phosphoserine intermediate is Ser102. Mg(2+)-binding residues include Ser102, Asp241, Asp243, and Asp245. The residue at position 102 (Ser102) is a Phosphoserine.

This sequence belongs to the phosphohexose mutase family. Mg(2+) serves as cofactor. In terms of processing, activated by phosphorylation.

The enzyme catalyses alpha-D-glucosamine 1-phosphate = D-glucosamine 6-phosphate. Functionally, catalyzes the conversion of glucosamine-6-phosphate to glucosamine-1-phosphate. In Shewanella baltica (strain OS155 / ATCC BAA-1091), this protein is Phosphoglucosamine mutase.